The following is a 393-amino-acid chain: Xyloside xylosyltransferase 1 (393 aa).

Residues 1–23 (MGLLRGGLPCARAMARLGAVRSH) lie on the Cytoplasmic side of the membrane. The chain crosses the membrane as a helical; Signal-anchor for type II membrane protein span at residues 24 to 44 (YCALLLAAALAVCAFYYLGSG). The Lumenal segment spans residues 45-393 (RETFSSATKR…GNCNTPIPED (349 aa)). Position 104-106 (104-106 (MFT)) interacts with UDP-alpha-D-xylose. Position 226 (Asp-226) interacts with Mn(2+). Leu-227 is a binding site for UDP-alpha-D-xylose. A Mn(2+)-binding site is contributed by Asp-228. The interval 263-266 (HTFW) is interaction with target proteins. Residues Ser-290, Leu-328, and Gln-331 each coordinate UDP-alpha-D-xylose. A glycoprotein contacts are provided by Gln-331 and Trp-360. Disulfide bonds link Cys-350–Cys-375 and Cys-357–Cys-386. His-383 contributes to the Mn(2+) binding site. Asn-385 contacts a glycoprotein.

The protein belongs to the glycosyltransferase 8 family. Homodimer. Dimer formation may be essential for the retention in endoplasmic reticulum. Mg(2+) is required as a cofactor. Requires Mn(2+) as cofactor.

Its subcellular location is the endoplasmic reticulum membrane. It carries out the reaction 3-O-[alpha-D-xylosyl-(1-&gt;3)-beta-D-glucosyl]-L-seryl-[EGF-like domain protein] + UDP-alpha-D-xylose = 3-O-[alpha-D-xylosyl-(1-&gt;3)-alpha-D-xylosyl-(1-&gt;3)-beta-D-glucosyl]-L-seryl-[EGF-like domain protein] + UDP + H(+). In terms of biological role, alpha-1,3-xylosyltransferase, which elongates the O-linked xylose-glucose disaccharide attached to EGF-like repeats in the extracellular domain of target proteins by catalyzing the addition of the second xylose. Known targets include Notch proteins and coagulation factors, such as F9. The sequence is that of Xyloside xylosyltransferase 1 (XXYLT1) from Homo sapiens (Human).